Here is a 316-residue protein sequence, read N- to C-terminus: N-acetylmuramic acid 6-phosphate etherase (316 aa).

The segment at 1 to 24 is disordered; the sequence is MTRFQSDAAVSADRGHLMTEQPNP. Residues 66–229 enclose the SIS domain; that stretch reads IASRLKDGGR…STAVMVRLGK (164 aa). Residue Glu-94 is the Proton donor of the active site. The active site involves Glu-125.

Belongs to the GCKR-like family. MurNAc-6-P etherase subfamily. In terms of assembly, homodimer.

It carries out the reaction N-acetyl-D-muramate 6-phosphate + H2O = N-acetyl-D-glucosamine 6-phosphate + (R)-lactate. The protein operates within amino-sugar metabolism; N-acetylmuramate degradation. Functionally, specifically catalyzes the cleavage of the D-lactyl ether substituent of MurNAc 6-phosphate, producing GlcNAc 6-phosphate and D-lactate. The sequence is that of N-acetylmuramic acid 6-phosphate etherase from Parasynechococcus marenigrum (strain WH8102).